A 159-amino-acid chain; its full sequence is Ribosome maturation factor RimP (159 aa).

This sequence belongs to the RimP family.

The protein localises to the cytoplasm. Its function is as follows. Required for maturation of 30S ribosomal subunits. This Streptococcus pneumoniae serotype 19F (strain G54) protein is Ribosome maturation factor RimP.